Reading from the N-terminus, the 249-residue chain is Probable transcriptional regulator ycf27 (249 aa).

One can recognise a Response regulatory domain in the interval 13–126 (HLLIVDDENN…ELEARIQSIL (114 aa)). The residue at position 62 (D62) is a 4-aspartylphosphate. Positions 82 to 100 (DIPIIMLTALEDVLDKVTG) form a DNA-binding region, H-T-H motif. A DNA-binding region (ompR/PhoB-type) is located at residues 142–246 (INLFKTGSLN…ARGTGYLCRK (105 aa)).

Its subcellular location is the plastid. The protein localises to the chloroplast. Probable promoter-specific protein mediating the interaction between DNA and RNA polymerase. In Cyanidium caldarium (Red alga), this protein is Probable transcriptional regulator ycf27 (ycf27).